Here is a 442-residue protein sequence, read N- to C-terminus: Shufflon protein B (442 aa).

A constant region region spans residues 1–361; sequence MKKYDRGWAS…TGAILSCQSG (361 aa). The interval 362-442 is variable region; it reads TWKSSSASIW…SYFMKITCLK (81 aa).

The protein is Shufflon protein B of Escherichia coli.